Reading from the N-terminus, the 901-residue chain is Desmocollin-2 (901 aa).

An N-terminal signal peptide occupies residues 1–27; the sequence is MEAARPSGSWNGALCRLLLLTLAILIF. Residues 28 to 135 constitute a propeptide that is removed on maturation; sequence ASDACKNVTL…KEKVLRRAKR (108 aa). N-linked (GlcNAc...) asparagine glycans are attached at residues N34 and N166. Cadherin domains are found at residues 136-243, 244-355, 356-471, 472-579, and 580-694; these read RWAP…YPIF, TEET…LPTF, TRTS…GPEC, NPPI…FIPK, and KTVI…QLGK. At 136-694 the chain is on the extracellular side; that stretch reads RWAPIPCSML…IGGGGVQLGK (559 aa). N392 carries an N-linked (GlcNAc...) (complex) asparagine glycan. N546 and N629 each carry an N-linked (GlcNAc...) asparagine glycan. A helical transmembrane segment spans residues 695–715; sequence WAILAILLGIALLFCILFTLV. Over 716 to 901 the chain is Cytoplasmic; the sequence is CGASGTSKQP…RTLAEACMKR (186 aa). Residues S864, S868, and S873 each carry the phosphoserine modification.

In terms of assembly, interacts with DSP, PKP2 and JUP. Interacts with DSG3; the interaction may limit the interaction of DSC3 with p38MAPK family members and therefore repress p38MAPK signaling activation. Expressed at intercalated disks in the heart, where it is colocalized with CDH2 (at protein level). Expressed in intestinal mucosal cells (at protein level).

It localises to the cell membrane. It is found in the cell junction. The protein resides in the desmosome. Functionally, a component of desmosome cell-cell junctions which are required for positive regulation of cellular adhesion. Promotes timely incorporation of DSG2 into desmosome intercellular junctions and promotes interaction of desmosome cell junctions with intermediate filament cytokeratin, via modulation of DSP phosphorylation. Plays an important role in desmosome-mediated maintenance of intestinal epithelial cell intercellular adhesion strength and barrier function. Positively regulates wound healing of intestinal mucosa via promotion of epithelial cell migration, and also plays a role in mechanotransduction of force between intestinal epithelial cells and extracellular matrix. May contribute to epidermal cell positioning (stratification) by mediating differential adhesiveness between cells that express different isoforms. May promote p38MAPK signaling activation that facilitates keratinocyte migration. The polypeptide is Desmocollin-2 (Homo sapiens (Human)).